Reading from the N-terminus, the 183-residue chain is Large ribosomal subunit protein eL18 (183 aa).

The interval 151-183 is disordered; sequence HFGPAPGAPRSHTKPYVRSKGHEQAKPSRRSNV.

It belongs to the eukaryotic ribosomal protein eL18 family.

It is found in the cytoplasm. This Plutella xylostella (Diamondback moth) protein is Large ribosomal subunit protein eL18 (RpL18).